The primary structure comprises 202 residues: Na(+)-translocating NADH-quinone reductase subunit E (202 aa).

6 helical membrane passes run 11–31 (SVFI…FIAV), 35–55 (IETA…TVPA), 81–101 (FIAL…LEMV), 114–134 (GIFL…LFMI), 144–164 (VVYG…MAGV), and 180–200 (LGIT…FSGI).

It belongs to the NqrDE/RnfAE family. Composed of six subunits; NqrA, NqrB, NqrC, NqrD, NqrE and NqrF.

Its subcellular location is the cell inner membrane. The enzyme catalyses a ubiquinone + n Na(+)(in) + NADH + H(+) = a ubiquinol + n Na(+)(out) + NAD(+). Functionally, NQR complex catalyzes the reduction of ubiquinone-1 to ubiquinol by two successive reactions, coupled with the transport of Na(+) ions from the cytoplasm to the periplasm. NqrA to NqrE are probably involved in the second step, the conversion of ubisemiquinone to ubiquinol. The sequence is that of Na(+)-translocating NADH-quinone reductase subunit E from Methylococcus capsulatus (strain ATCC 33009 / NCIMB 11132 / Bath).